Here is an 88-residue protein sequence, read N- to C-terminus: MKTVFAILFLTFIAFTYAKSYEDVKEEIKNEVEREIFEDLEEESDVLDSNVRELNDAKPWRFRRAIRSIRWRKVGPYVPIIVKMAGKK.

The first 18 residues, 1–18 (MKTVFAILFLTFIAFTYA), serve as a signal peptide directing secretion. Positions 19–57 (KSYEDVKEEIKNEVEREIFEDLEEESDVLDSNVRELNDA) are excised as a propeptide. Residue Ala85 is modified to Alanine amide.

The protein belongs to the arminin family. Expressed in entodermal epithelium along the body column.

It is found in the secreted. It localises to the target cell membrane. In terms of biological role, antimicrobial peptide with a broad-spectrum antimicrobial activity. Keeps its antibacterial activity under a wide range of salt concentrations that mimic physiological conditions of human blood, which is surprising, since Hydra is an obligate freshwater animal with nearly no salt tolerance. Does not affect red blood cells. This is Arminin 7965 from Hydra vulgaris (Hydra).